A 603-amino-acid chain; its full sequence is Cholinesterase (603 aa).

The signal sequence occupies residues 1 to 29 (MQTQHTKVTQTHFLLWILLLCMPFGKSHT). The N-linked (GlcNAc...) asparagine glycan is linked to N86. C94 and C121 form a disulfide bridge. An N-linked (GlcNAc...) asparagine glycan is attached at N135. 145–146 (GG) serves as a coordination point for substrate. The active-site Acyl-ester intermediate is the S227. S227 is subject to Phosphoserine. N-linked (GlcNAc...) asparagine glycosylation is present at N270. Cysteines 281 and 292 form a disulfide. The active-site Charge relay system is E354. N370 carries N-linked (GlcNAc...) asparagine glycosylation. A disulfide bridge links C429 with C548. H467 acts as the Charge relay system in catalysis. N-linked (GlcNAc...) asparagine glycosylation is found at N484, N510, and N515.

The protein belongs to the type-B carboxylesterase/lipase family. In terms of assembly, homotetramer; disulfide-linked. Dimer of dimers. Present in most cells except erythrocytes.

Its subcellular location is the secreted. It catalyses the reaction an acylcholine + H2O = a carboxylate + choline + H(+). Its function is as follows. Esterase with broad substrate specificity. Contributes to the inactivation of the neurotransmitter acetylcholine. Can degrade neurotoxic organophosphate esters. The sequence is that of Cholinesterase (Bche) from Mus musculus (Mouse).